Reading from the N-terminus, the 710-residue chain is Adenylosuccinate synthetase (710 aa).

Disordered stretches follow at residues 1 to 53 (MPVR…PQEA) and 84 to 110 (DEPP…SGRS). Polar residues-rich tracts occupy residues 10–27 (YNNS…STTA) and 101–110 (ANASNSSGRS). Residues 180–186 (GDEGKGK) and 210–212 (GHT) each bind GTP. Asp-181 acts as the Proton acceptor in catalysis. Mg(2+)-binding residues include Asp-181 and Gly-210. IMP-binding positions include 181 to 184 (DEGK), 208 to 211 (NAGH), Thr-295, Lys-309, Gln-421, Thr-437, and Lys-567. His-211 acts as the Proton donor in catalysis. 563–569 (AVTKKPR) is a binding site for substrate. GTP-binding positions include Arg-569 and 697–699 (GNG).

It belongs to the adenylosuccinate synthetase family. Homodimer. Requires Mg(2+) as cofactor.

Its subcellular location is the cytoplasm. The catalysed reaction is IMP + L-aspartate + GTP = N(6)-(1,2-dicarboxyethyl)-AMP + GDP + phosphate + 2 H(+). It participates in purine metabolism; AMP biosynthesis via de novo pathway; AMP from IMP: step 1/2. In terms of biological role, plays an important role in the salvage pathway for purine nucleotide biosynthesis. Catalyzes the first committed step in the biosynthesis of AMP from IMP. The chain is Adenylosuccinate synthetase (ADSS) from Leishmania donovani.